Here is a 138-residue protein sequence, read N- to C-terminus: Translation initiation factor 5A (138 aa).

Residue K37 is modified to Hypusine.

This sequence belongs to the eIF-5A family.

The protein resides in the cytoplasm. Functionally, functions by promoting the formation of the first peptide bond. This is Translation initiation factor 5A (eif5a) from Pyrococcus horikoshii (strain ATCC 700860 / DSM 12428 / JCM 9974 / NBRC 100139 / OT-3).